Consider the following 41-residue polypeptide: Pi-stichotoxin-Hcr5a (41 aa).

Disulfide bonds link Cys-4–Cys-37, Cys-6–Cys-30, and Cys-20–Cys-38.

The protein belongs to the sea anemone type 3 (BDS) potassium channel toxin family.

It localises to the secreted. It is found in the nematocyst. Weakly inhibits human homomeric ASIC3 (IC(50)=5.5 uM). This Radianthus crispa (Leathery sea anemone) protein is Pi-stichotoxin-Hcr5a.